A 100-amino-acid polypeptide reads, in one-letter code: uncharacterized protein (100 aa).

A helical membrane pass occupies residues 62–82; the sequence is IPIVIIVSIFILLIIGSISLY.

Its subcellular location is the membrane. This is an uncharacterized protein from Dictyostelium discoideum (Social amoeba).